Here is a 180-residue protein sequence, read N- to C-terminus: Inosine/xanthosine triphosphatase (180 aa).

8-13 (TTNPAK) provides a ligand contact to substrate. 2 residues coordinate Mg(2+): Asp38 and Glu68. 68-69 (EA) contacts substrate.

It belongs to the YjjX NTPase family. In terms of assembly, homodimer. Requires Mg(2+) as cofactor. It depends on Mn(2+) as a cofactor.

It carries out the reaction XTP + H2O = XDP + phosphate + H(+). The enzyme catalyses ITP + H2O = IDP + phosphate + H(+). Phosphatase that hydrolyzes non-canonical purine nucleotides such as XTP and ITP to their respective diphosphate derivatives. Probably excludes non-canonical purines from DNA/RNA precursor pool, thus preventing their incorporation into DNA/RNA and avoiding chromosomal lesions. This chain is Inosine/xanthosine triphosphatase, found in Yersinia pseudotuberculosis serotype IB (strain PB1/+).